We begin with the raw amino-acid sequence, 535 residues long: Probable bifunctional tRNA threonylcarbamoyladenosine biosynthesis protein (535 aa).

The tract at residues 1 to 323 is kae1; the sequence is MICLGLEGTA…YRTDMVEVNW (323 aa). Fe cation contacts are provided by His106, His110, and Tyr127. Residues 127-131, Asp159, Gly172, Glu176, and Asn256 each bind L-threonylcarbamoyladenylate; that span reads YVSGG. Position 284 (Asp284) interacts with Fe cation. The 203-residue stretch at 333 to 535 folds into the Protein kinase domain; the sequence is KIPEHLIGKG…DVERRARYVE (203 aa). Residues 339–347 and Lys360 contribute to the ATP site; that span reads IGKGAEADI. The Proton acceptor; for kinase activity role is filled by Asp451.

It in the N-terminal section; belongs to the KAE1 / TsaD family. The protein in the C-terminal section; belongs to the protein kinase superfamily. Tyr protein kinase family. BUD32 subfamily. In terms of assembly, component of the KEOPS complex that consists of Kae1, Bud32, Cgi121 and Pcc1; the whole complex dimerizes. Requires Fe(2+) as cofactor.

It is found in the cytoplasm. It catalyses the reaction L-seryl-[protein] + ATP = O-phospho-L-seryl-[protein] + ADP + H(+). The catalysed reaction is L-threonyl-[protein] + ATP = O-phospho-L-threonyl-[protein] + ADP + H(+). The enzyme catalyses L-threonylcarbamoyladenylate + adenosine(37) in tRNA = N(6)-L-threonylcarbamoyladenosine(37) in tRNA + AMP + H(+). With respect to regulation, activity provided by the Kae1 region seems to be regulated via phosphorylation by the protein kinase Bud32, which is itself activated by Cgi121. Functionally, required for the formation of a threonylcarbamoyl group on adenosine at position 37 (t(6)A37) in tRNAs that read codons beginning with adenine. Is a component of the KEOPS complex that is probably involved in the transfer of the threonylcarbamoyl moiety of threonylcarbamoyl-AMP (TC-AMP) to the N6 group of A37. The Kae1 domain likely plays a direct catalytic role in this reaction. The Bud32 domain probably displays kinase activity that regulates Kae1 function. In vitro, exhibits low ATPase activity, but does not bind DNA and does not have endonuclease activity. The polypeptide is Probable bifunctional tRNA threonylcarbamoyladenosine biosynthesis protein (Methanocaldococcus jannaschii (strain ATCC 43067 / DSM 2661 / JAL-1 / JCM 10045 / NBRC 100440) (Methanococcus jannaschii)).